We begin with the raw amino-acid sequence, 156 residues long: Peroxisomal membrane associated protein 20 (156 aa).

One can recognise a Thioredoxin domain in the interval 2–156 (VAVGSTLPKV…SSADKVLSSL (155 aa)). C43 (cysteine sulfenic acid (-SOH) intermediate) is an active-site residue.

Belongs to the peroxiredoxin family. Prx5 subfamily. As to quaternary structure, homodimer; disulfide-linked, upon oxidation.

The protein localises to the cytoplasm. The protein resides in the nucleus. Functionally, may act as a chaperone rather than a peroxidase. Has no thioredoxin-dependent peroxidase activity. Shows weak chaperone activity. This chain is Peroxisomal membrane associated protein 20, found in Schizosaccharomyces pombe (strain 972 / ATCC 24843) (Fission yeast).